Reading from the N-terminus, the 412-residue chain is MADGEGGWWGGWLTQSFQSVKDKSAEAYEFIKRDLTEFSSVVQHDTACSVVATANAIKSKLAVEGSSETTEKVKKGITNILGVITDTLAPPPDKTIDCDVITLVATPTGTTEVYDSGKARLYSLQADPATYCNEPDGPPQQFDSWLSTFSLEERKAEISELLVSSPAIRALYTKMVPAAVAHAEFWQRYFYKVFQLEQEEARRVALKQRAEQTDHSESLGWEEEDEEGEFLGATSLSRLDFTPPVEESRVPAVTVADTPESSSPPQAVASLSNVASDVTPSVSSDSVSFPTQIENQAESVTIRVTQPSPAADELSQKLSDTGLQETFPEERPAPREETAREDMAQDLRVFELNSDSGKSTPSNNGKKGSSTDVSEDWEKDFDLDMTEEEVQMALSKVDATEELEDEDWENWE.

One can recognise a BSD domain in the interval tryptophan 145–glutamate 197. The span at glutamine 208–glutamate 217 shows a compositional bias: basic and acidic residues. Disordered stretches follow at residues glutamine 208–glutamate 227, valine 253–serine 272, and glutamate 298–glutamate 412. Polar residues-rich tracts occupy residues proline 259–serine 272 and glutamate 298–serine 308. Serine 308 carries the post-translational modification Phosphoserine. Residues proline 328 to valine 349 show a composition bias toward basic and acidic residues. A compositionally biased stretch (polar residues) spans asparagine 353–aspartate 372. Acidic residues-rich tracts occupy residues valine 373–valine 390 and threonine 400–glutamate 412.

This Danio rerio (Zebrafish) protein is BSD domain-containing protein 1 (bsdc1).